A 381-amino-acid chain; its full sequence is MESIGIVSPQTMHFSEPLRLQNGSSLANYDLVVETYGKLNAARSNAVLVCHALNASHHVAGVYADDPKNVGWWDNMVGPGKPLDTNRFFVIGVNNLGSCFGSTGPMSIDPSTGRPYGASFPVVTVEDWVNAQARVADEFGIEKFAAVMGGSLGGMQALAWSMMYPDRLEHCIVVASTPKLSAQNIAFNEVARSSILSDPDFHGGDYYAHGVKPKRGLRVARMIGHITYLSDDDMAAKFGRALRRAEGAEKAYNFNFDVEFEVESYLRYQGDKFADYFDANTYLLITRALDYFDPAKAYDGDLTAALAHTKAKYLIASFTTDWRFAPARSRELVKALLDHKRQVTYGEIDAPHGHDAFLLDDARYHNLMRAYYERIAAEVNA.

The region spanning 45–360 (NAVLVCHALN…PHGHDAFLLD (316 aa)) is the AB hydrolase-1 domain. Ser151 functions as the Nucleophile in the catalytic mechanism. Arg221 contributes to the substrate binding site. Catalysis depends on residues Asp321 and His354. Asp355 is a binding site for substrate.

The protein belongs to the AB hydrolase superfamily. MetX family. As to quaternary structure, homodimer.

The protein localises to the cytoplasm. The catalysed reaction is L-homoserine + succinyl-CoA = O-succinyl-L-homoserine + CoA. The protein operates within amino-acid biosynthesis; L-methionine biosynthesis via de novo pathway; O-succinyl-L-homoserine from L-homoserine: step 1/1. In terms of biological role, transfers a succinyl group from succinyl-CoA to L-homoserine, forming succinyl-L-homoserine. The chain is Homoserine O-succinyltransferase from Paraburkholderia phymatum (strain DSM 17167 / CIP 108236 / LMG 21445 / STM815) (Burkholderia phymatum).